Consider the following 124-residue polypeptide: Glycine cleavage system H protein (124 aa).

The Lipoyl-binding domain occupies Val22–Glu104. The residue at position 63 (Lys63) is an N6-lipoyllysine.

This sequence belongs to the GcvH family. As to quaternary structure, the glycine cleavage system is composed of four proteins: P, T, L and H. (R)-lipoate is required as a cofactor.

Functionally, the glycine cleavage system catalyzes the degradation of glycine. The H protein shuttles the methylamine group of glycine from the P protein to the T protein. In Beutenbergia cavernae (strain ATCC BAA-8 / DSM 12333 / CCUG 43141 / JCM 11478 / NBRC 16432 / NCIMB 13614 / HKI 0122), this protein is Glycine cleavage system H protein.